The sequence spans 140 residues: 3-hydroxyacyl-[acyl-carrier-protein] dehydratase FabZ (140 aa).

The active site involves His-47.

This sequence belongs to the thioester dehydratase family. FabZ subfamily.

The protein localises to the cytoplasm. It carries out the reaction a (3R)-hydroxyacyl-[ACP] = a (2E)-enoyl-[ACP] + H2O. In terms of biological role, involved in unsaturated fatty acids biosynthesis. Catalyzes the dehydration of short chain beta-hydroxyacyl-ACPs and long chain saturated and unsaturated beta-hydroxyacyl-ACPs. The sequence is that of 3-hydroxyacyl-[acyl-carrier-protein] dehydratase FabZ from Streptococcus equi subsp. equi (strain 4047).